Here is a 207-residue protein sequence, read N- to C-terminus: Ribosomal RNA small subunit methyltransferase G (207 aa).

S-adenosyl-L-methionine is bound by residues glycine 73, leucine 78, 124–125 (VE), and arginine 139.

The protein belongs to the methyltransferase superfamily. RNA methyltransferase RsmG family.

It localises to the cytoplasm. It catalyses the reaction guanosine(527) in 16S rRNA + S-adenosyl-L-methionine = N(7)-methylguanosine(527) in 16S rRNA + S-adenosyl-L-homocysteine. Functionally, specifically methylates the N7 position of guanine in position 527 of 16S rRNA. The protein is Ribosomal RNA small subunit methyltransferase G of Escherichia coli O1:K1 / APEC.